The primary structure comprises 273 residues: MSTPGTLHIVATPIGNLGDLSPRAQHILRTVTMICAEDTRHTRQLLAHFGIERPLLALHAHNEDTLAERIITRLISGASLALVSDAGTPLISDPGFLLVRAARAAGIRVTPVPGPSALIAALSVSGLPSNRFTFEGFLPAKPTARRDRLTHLAHEPRTLIFYEASHRIAECLTDLATIFGSMRAAVVARELTKIFETVLDGTLATLQTQVANDDNQRKGEFVIIVQGAADQDAAKITEGRRVYALLKEHLPPSSAAKLAAEITGAPRKALYGG.

It belongs to the methyltransferase superfamily. RsmI family.

Its subcellular location is the cytoplasm. The enzyme catalyses cytidine(1402) in 16S rRNA + S-adenosyl-L-methionine = 2'-O-methylcytidine(1402) in 16S rRNA + S-adenosyl-L-homocysteine + H(+). In terms of biological role, catalyzes the 2'-O-methylation of the ribose of cytidine 1402 (C1402) in 16S rRNA. This is Ribosomal RNA small subunit methyltransferase I from Xylella fastidiosa (strain 9a5c).